A 383-amino-acid chain; its full sequence is Putative dehydratase subunit YjiM (383 aa).

The protein belongs to the FldB/FldC dehydratase alpha/beta subunit family.

This Escherichia coli (strain K12) protein is Putative dehydratase subunit YjiM (yjiM).